The primary structure comprises 610 residues: Scarecrow-like protein 11 (610 aa).

Disordered stretches follow at residues 32–54 (NNLF…PPTV), 98–159 (QQSP…RRNK), and 186–220 (QEEE…HKTN). Composition is skewed to low complexity over residues 41-52 (SQNQSSPNDSPP) and 99-119 (QSPE…GDQD). 2 stretches are compositionally biased toward polar residues: residues 123–137 (PSTT…SSGE) and 209–220 (GSSNKSKTHKTN). In terms of domain architecture, GRAS spans 215-598 (KTHKTNTVDL…RVIYAFSCWK (384 aa)). Positions 222 to 283 (VDLRSLLTQC…ARITGNISPP (62 aa)) are leucine repeat I (LRI). The tract at residues 302–367 (YKLFVHTCPI…GGPPMLRVTG (66 aa)) is VHIID. A VHIID motif is present at residues 333–337 (LHIVD). Residues 383 to 415 (ETGRRLKRFCDQFNVPFEFNFIAKKWETITLDE) are leucine repeat II (LRII). The PFYRE stretch occupies residues 424-520 (TVVNCIHRLQ…RELLVRDAMS (97 aa)). The segment at 523–598 (SCEGAERFAR…RVIYAFSCWK (76 aa)) is SAW.

The protein belongs to the GRAS family. Highly expressed in roots and at lower levels in leaves and sepals. Expressed in siliques.

It localises to the nucleus. In terms of biological role, probable transcription factor involved in plant development. This chain is Scarecrow-like protein 11 (SCL11), found in Arabidopsis thaliana (Mouse-ear cress).